The chain runs to 32 residues: Conotoxin pr6d (32 aa).

Position 5 is a 4-hydroxyproline (Pro5). Intrachain disulfides connect Cys7–Cys20, Cys14–Cys25, and Cys19–Cys30.

As to expression, expressed by the venom duct.

It is found in the secreted. The chain is Conotoxin pr6d from Conus parius (Cone snail).